The chain runs to 737 residues: Protein-glucosylgalactosylhydroxylysine glucosidase (737 aa).

300–301 (WD) is a substrate binding site. Glutamate 430 functions as the Proton donor in the catalytic mechanism. 498–499 (KQ) provides a ligand contact to substrate. A disordered region spans residues 681 to 737 (RSAGRIQMSPPKLPGSSSSEFPGRTFSDVRDPLQSPLWVTLGSSSPTESLTVDPASE). The segment covering 721–730 (LGSSSPTESL) has biased composition (polar residues).

This sequence belongs to the glycosyl hydrolase 65 family.

It catalyses the reaction (5R)-5-O-[alpha-D-glucosyl-(1-&gt;2)-beta-D-galactosyl]-5-hydroxy-L-lysyl-[collagen] + H2O = (5R)-5-O-(beta-D-galactosyl)-5-hydroxy-L-lysyl-[collagen] + D-glucose. Its function is as follows. Catalyzes the hydrolysis of glucose from the disaccharide unit linked to hydroxylysine residues of collagen and collagen-like proteins. The chain is Protein-glucosylgalactosylhydroxylysine glucosidase from Homo sapiens (Human).